We begin with the raw amino-acid sequence, 117 residues long: Large ribosomal subunit protein bL20 (117 aa).

It belongs to the bacterial ribosomal protein bL20 family.

Its function is as follows. Binds directly to 23S ribosomal RNA and is necessary for the in vitro assembly process of the 50S ribosomal subunit. It is not involved in the protein synthesizing functions of that subunit. This Leptospira interrogans serogroup Icterohaemorrhagiae serovar copenhageni (strain Fiocruz L1-130) protein is Large ribosomal subunit protein bL20.